Here is a 295-residue protein sequence, read N- to C-terminus: Polyprenyl transferase dpmaC (295 aa).

Helical transmembrane passes span 39–59 (LFCV…NDWI), 84–104 (QAFV…HVML), 109–124 (VHVI…YPFL), 131–151 (KLHI…AIPG), 168–188 (YCLP…TAYS), 213–233 (LVLV…LTQF), 237–257 (WLWV…LALF), and 271–291 (SNFV…LLKA).

It belongs to the UbiA prenyltransferase family. It depends on Mg(2+) as a cofactor.

The protein localises to the membrane. It functions in the pathway secondary metabolite biosynthesis; terpenoid biosynthesis. Its function is as follows. Polyprenyl transferase; part of the gene cluster that mediates the biosynthesis of the diterpenoid pyrones subglutinols A and B. The first step of the pathway is the synthesis of the alpha-pyrone moiety by the polyketide synthase dpmaA via condensation of one acetyl-CoA starter unit with 3 malonyl-CoA units and 2 methylations. The alpha-pyrone is then combined with geranylgeranyl pyrophosphate (GGPP) formed by the GGPP synthase dpmaD through the action of the prenyltransferase dpmaC to yield a linear alpha-pyrone diterpenoid. Subsequent steps in the diterpenoid pyrone biosynthetic pathway involve the decalin core formation, which is initiated by the epoxidation of the C10-C11 olefin by the FAD-dependent oxidoreductase dpmaE, and is followed by a cyclization cascade catalyzed by the terpene cyclase dpmaB. The dehydrogenase dpmaF is then involved in tetrahydrofuran (THF) ring formation at the C5 unit to complete the formation of subglutinols A and B. The polypeptide is Polyprenyl transferase dpmaC (Metarhizium anisopliae (Entomophthora anisopliae)).